Here is a 374-residue protein sequence, read N- to C-terminus: Calcium/calmodulin-dependent protein kinase type 1 (374 aa).

The region spanning 20–276 (YDFRDVLGTG…CEQALQHPWI (257 aa)) is the Protein kinase domain. Residues 26-34 (LGTGAFSEV) and Lys49 each bind ATP. Residue Lys59 forms a Glycyl lysine isopeptide (Lys-Gly) (interchain with G-Cter in ubiquitin) linkage. Asp141 functions as the Proton acceptor in the catalytic mechanism. Phosphothreonine; by CaMKK1 and CaMKK2 is present on Thr177. The Involved in nuclear import motif lies at 263–264 (KR). An autoinhibitory domain region spans residues 276 to 316 (IAGDTALDKNIHQSVSEQIKKNFAKSKWKQAFNATAVVRHM). Positions 296–317 (KNFAKSKWKQAFNATAVVRHMR) are calmodulin-binding. Positions 315 to 321 (HMRKLQL) match the Nuclear export signal motif.

This sequence belongs to the protein kinase superfamily. CAMK Ser/Thr protein kinase family. CaMK subfamily. As to quaternary structure, monomer. Interacts with XPO1. Phosphorylated by CaMKK1 and CaMKK2 on Thr-177. In terms of processing, polybiquitinated by the E3 ubiquitin-protein ligase complex SCF(FBXL12), leading to proteasomal degradation. Widely expressed.

Its subcellular location is the cytoplasm. It localises to the nucleus. It catalyses the reaction L-seryl-[protein] + ATP = O-phospho-L-seryl-[protein] + ADP + H(+). The enzyme catalyses L-threonyl-[protein] + ATP = O-phospho-L-threonyl-[protein] + ADP + H(+). Its activity is regulated as follows. Activated by Ca(2+)/calmodulin. Binding of calmodulin results in conformational change that relieves intrasteric autoinhibition and allows phosphorylation of Thr-177 within the activation loop by CaMKK1 or CaMKK2. Phosphorylation of Thr-177 results in several fold increase in total activity. Unlike CaMK4, is unable to exhibit autonomous activity after Ca(2+)/calmodulin activation. Calcium/calmodulin-dependent protein kinase that operates in the calcium-triggered CaMKK-CaMK1 signaling cascade and, upon calcium influx, regulates transcription activators activity, cell cycle, hormone production, cell differentiation, actin filament organization and neurite outgrowth. Recognizes the substrate consensus sequence [MVLIF]-x-R-x(2)-[ST]-x(3)-[MVLIF]. Regulates axonal extension and growth cone motility in hippocampal and cerebellar nerve cells. Upon NMDA receptor-mediated Ca(2+) elevation, promotes dendritic growth in hippocampal neurons and is essential in synapses for full long-term potentiation (LTP) and ERK2-dependent translational activation. Downstream of NMDA receptors, promotes the formation of spines and synapses in hippocampal neurons by phosphorylating ARHGEF7/BETAPIX on 'Ser-516', which results in the enhancement of ARHGEF7 activity and activation of RAC1. Promotes neuronal differentiation and neurite outgrowth by activation and phosphorylation of MARK2 on 'Ser-91', 'Ser-92', 'Ser-93' and 'Ser-294'. Promotes nuclear export of HDAC5 and binding to 14-3-3 by phosphorylation of 'Ser-259' and 'Ser-498' in the regulation of muscle cell differentiation. Regulates NUMB-mediated endocytosis by phosphorylation of NUMB on 'Ser-275' and 'Ser-294'. Involved in the regulation of basal and estrogen-stimulated migration of medulloblastoma cells through ARHGEF7/BETAPIX phosphorylation. Is required for proper activation of cyclin-D1/CDK4 complex during G1 progression in diploid fibroblasts. Plays a role in K(+) and ANG2-mediated regulation of the aldosterone synthase (CYP11B2) to produce aldosterone in the adrenal cortex. Phosphorylates EIF4G3/eIF4GII. In vitro phosphorylates CREB1, ATF1, CFTR, MYL9 and SYN1/synapsin I. The polypeptide is Calcium/calmodulin-dependent protein kinase type 1 (Camk1) (Rattus norvegicus (Rat)).